We begin with the raw amino-acid sequence, 78 residues long: Small ribosomal subunit protein bS20 (78 aa).

Positions 1–34 are disordered; sequence MANIKSNLKRNKQNRARHTVVHSQTSAVKTQIKK. The span at 7–20 shows a compositional bias: basic residues; sequence NLKRNKQNRARHTV. Over residues 21–34 the composition is skewed to polar residues; that stretch reads VHSQTSAVKTQIKK.

The protein belongs to the bacterial ribosomal protein bS20 family.

Its function is as follows. Binds directly to 16S ribosomal RNA. The sequence is that of Small ribosomal subunit protein bS20 from Malacoplasma penetrans (strain HF-2) (Mycoplasma penetrans).